The chain runs to 582 residues: MGGRARSILRWLRHHRSRRVSSSSFHLTTTGDDTVKDLHDPRREDAEGDGWEEVHEGPESDPEEYIALVSEDAGTHLPVRTEPRRMDPSKKEPDFFTEYGEANRYKVSEVIGKGSYGVVAAAVDTQTGERVAIKKINDVFDHVSDATRILREIKLLRLLRHPDIVEIKHIMLPPSRREFRDIYVIFELMESDLHQVIKANDDLTPEHHQFFLYQLLRGMKYIHAASVFHRDLKPKNILANADCKLKVCDFGLARVSFNDTPSAIFWTDYVATRWYRAPELCGSFFSKYTPAIDIWSVGCIFAELLTGKPLFPGKNVVHQLDLMTDLLGTPSAESLAKIRNEKARRYLSNMRKKPRVPFTKKFPGVDPMALHLLERLLAFDPKDRPSAEEALTDPYFNGLANSEREPIAQPISKLEFEFEKRKLAKDDVRELIYREILEYHPHMLQEYLRGGDQMSFMYPSGVDRFKRQFAHLEEGVSKGEKSSPQLRQNASLPRERAIGNKHGDDEYHAKLNVGEKPCHASVTDGISKPLMSARSLLKSESISASKCIGEKPKQDRDQEDSLTESMDETADEVSEKVAQLKT.

The disordered stretch occupies residues 22–61; sequence SSSFHLTTTGDDTVKDLHDPRREDAEGDGWEEVHEGPESD. Over residues 33-45 the composition is skewed to basic and acidic residues; it reads DTVKDLHDPRRED. A Protein kinase domain is found at 105–396; the sequence is YKVSEVIGKG…AEEALTDPYF (292 aa). ATP contacts are provided by residues 111-119 and Lys-134; that span reads IGKGSYGVV. Catalysis depends on Asp-231, which acts as the Proton acceptor. Position 267 is a phosphothreonine (Thr-267). The TXY motif lies at 267–269; sequence TDY. The residue at position 269 (Tyr-269) is a Phosphotyrosine. Disordered stretches follow at residues 474–502 and 542–582; these read EGVSKGEKSSPQLRQNASLPRERAIGNKH and ISAS…QLKT. A compositionally biased stretch (polar residues) spans 482 to 491; that stretch reads SSPQLRQNAS. Over residues 493 to 502 the composition is skewed to basic and acidic residues; it reads PRERAIGNKH. Over residues 557-572 the composition is skewed to acidic residues; that stretch reads DQEDSLTESMDETADE.

The protein belongs to the protein kinase superfamily. CMGC Ser/Thr protein kinase family. MAP kinase subfamily. Post-translationally, dually phosphorylated on Thr-267 and Tyr-269, which activates the enzyme.

It catalyses the reaction L-seryl-[protein] + ATP = O-phospho-L-seryl-[protein] + ADP + H(+). The enzyme catalyses L-threonyl-[protein] + ATP = O-phospho-L-threonyl-[protein] + ADP + H(+). Its activity is regulated as follows. Activated by threonine and tyrosine phosphorylation. The polypeptide is Mitogen-activated protein kinase 17 (MPK17) (Oryza sativa subsp. japonica (Rice)).